The sequence spans 24 residues: Caerin-2.1 (24 aa).

The protein belongs to the frog skin active peptide (FSAP) family. Caerin subfamily. In terms of tissue distribution, expressed by the skin dorsal glands.

Its subcellular location is the secreted. Its function is as follows. Inhibits the formation of NO by neuronal nitric oxide synthase. This is Caerin-2.1 from Litoria rothii (Roth's tree frog).